The chain runs to 954 residues: Valine--tRNA ligase (954 aa).

The 'HIGH' region signature appears at 48–58 (PNVTGSLHMGH). Residues 560–564 (KMSKS) carry the 'KMSKS' region motif. Lys563 is a binding site for ATP. Residues 883 to 953 (AGFINKEAEL…IQEQYKAIEA (71 aa)) are a coiled coil.

Belongs to the class-I aminoacyl-tRNA synthetase family. ValS type 1 subfamily. In terms of assembly, monomer.

Its subcellular location is the cytoplasm. It catalyses the reaction tRNA(Val) + L-valine + ATP = L-valyl-tRNA(Val) + AMP + diphosphate. Its function is as follows. Catalyzes the attachment of valine to tRNA(Val). As ValRS can inadvertently accommodate and process structurally similar amino acids such as threonine, to avoid such errors, it has a 'posttransfer' editing activity that hydrolyzes mischarged Thr-tRNA(Val) in a tRNA-dependent manner. The protein is Valine--tRNA ligase of Haemophilus influenzae (strain PittEE).